Consider the following 184-residue polypeptide: Glutathione-regulated potassium-efflux system ancillary protein KefG (184 aa).

The protein belongs to the NAD(P)H dehydrogenase (quinone) family. KefG subfamily. As to quaternary structure, interacts with KefB.

It is found in the cell inner membrane. It carries out the reaction a quinone + NADH + H(+) = a quinol + NAD(+). The enzyme catalyses a quinone + NADPH + H(+) = a quinol + NADP(+). Regulatory subunit of a potassium efflux system that confers protection against electrophiles. Required for full activity of KefB. This Yersinia enterocolitica serotype O:8 / biotype 1B (strain NCTC 13174 / 8081) protein is Glutathione-regulated potassium-efflux system ancillary protein KefG.